The primary structure comprises 128 residues: Flagellar basal body rod protein FlgB (128 aa).

Belongs to the flagella basal body rod proteins family. The basal body constitutes a major portion of the flagellar organelle and consists of a number of rings mounted on a central rod. In Gram-negative bacteria, at least four rings, L, P, S and M are present, whereas Gram-positive bacteria lack the L and P rings. The rod consists of about 26 subunits of FlgG in the distal portion, and FlgB, FlgC and FlgF build up the proximal portion of the rod with about 6 subunits each. Rod assembly occurs by export via the flagellum-specific pathway of its constituent proteins and by their incorporation into the rod structure in the probable order of FlgB, FlgC, FlgF and FlgG. Another protein, FliE, also assembles onto the stable rod structure.

The protein resides in the bacterial flagellum basal body. Structural component of flagellum, the bacterial motility apparatus. Part of the rod structure of flagellar basal body. This is Flagellar basal body rod protein FlgB from Cereibacter sphaeroides (Rhodobacter sphaeroides).